An 815-amino-acid polypeptide reads, in one-letter code: Phenylalanine--tRNA ligase beta subunit (815 aa).

Residues 39-148 form the tRNA-binding domain; it reads SKELQKFEVA…KDAVVGDNFT (110 aa). In terms of domain architecture, B5 spans 421–496; that stretch reads PQKKPLDFSV…RIYGYDKIES (76 aa). Positions 474, 480, 483, and 484 each coordinate Mg(2+). The region spanning 721-814 is the FDX-ACB domain; sequence SDYQANFRDY…ISQKFQGILR (94 aa).

It belongs to the phenylalanyl-tRNA synthetase beta subunit family. Type 1 subfamily. As to quaternary structure, tetramer of two alpha and two beta subunits. It depends on Mg(2+) as a cofactor.

It localises to the cytoplasm. The catalysed reaction is tRNA(Phe) + L-phenylalanine + ATP = L-phenylalanyl-tRNA(Phe) + AMP + diphosphate + H(+). This Rickettsia prowazekii (strain Madrid E) protein is Phenylalanine--tRNA ligase beta subunit (pheT).